The following is a 408-amino-acid chain: Argininosuccinate synthase (408 aa).

ATP is bound by residues 10–18 (AYSGGLDTS) and alanine 37. The L-citrulline site is built by tyrosine 90 and serine 95. Glycine 120 contributes to the ATP binding site. Residues threonine 122, asparagine 126, and aspartate 127 each contribute to the L-aspartate site. Residue asparagine 126 participates in L-citrulline binding. Positions 130, 181, 190, 266, and 278 each coordinate L-citrulline.

This sequence belongs to the argininosuccinate synthase family. Type 1 subfamily. In terms of assembly, homotetramer.

The protein resides in the cytoplasm. The catalysed reaction is L-citrulline + L-aspartate + ATP = 2-(N(omega)-L-arginino)succinate + AMP + diphosphate + H(+). It functions in the pathway amino-acid biosynthesis; L-arginine biosynthesis; L-arginine from L-ornithine and carbamoyl phosphate: step 2/3. The polypeptide is Argininosuccinate synthase (Chromobacterium violaceum (strain ATCC 12472 / DSM 30191 / JCM 1249 / CCUG 213 / NBRC 12614 / NCIMB 9131 / NCTC 9757 / MK)).